Consider the following 188-residue polypeptide: UPF0314 protein Sala_3154 (188 aa).

The next 3 membrane-spanning stretches (helical) occupy residues 8-28 (TGWLVAAALVALLAAILIFMG), 57-77 (WYSFSHIIHGFIFYGVLRWIM), and 143-163 (MRWWVTAALAIAFELFTLWTI).

The protein belongs to the UPF0314 family.

The protein localises to the cell membrane. This Sphingopyxis alaskensis (strain DSM 13593 / LMG 18877 / RB2256) (Sphingomonas alaskensis) protein is UPF0314 protein Sala_3154.